Consider the following 362-residue polypeptide: UDP-3-O-acylglucosamine N-acyltransferase 1 (362 aa).

The active-site Proton acceptor is the His258.

Belongs to the transferase hexapeptide repeat family. LpxD subfamily. Homotrimer.

It carries out the reaction a UDP-3-O-[(3R)-3-hydroxyacyl]-alpha-D-glucosamine + a (3R)-hydroxyacyl-[ACP] = a UDP-2-N,3-O-bis[(3R)-3-hydroxyacyl]-alpha-D-glucosamine + holo-[ACP] + H(+). The protein operates within bacterial outer membrane biogenesis; LPS lipid A biosynthesis. Catalyzes the N-acylation of UDP-3-O-acylglucosamine using 3-hydroxyacyl-ACP as the acyl donor. Is involved in the biosynthesis of lipid A, a phosphorylated glycolipid that anchors the lipopolysaccharide to the outer membrane of the cell. This is UDP-3-O-acylglucosamine N-acyltransferase 1 from Nitrobacter winogradskyi (strain ATCC 25391 / DSM 10237 / CIP 104748 / NCIMB 11846 / Nb-255).